The primary structure comprises 662 residues: Phosphomethylpyrimidine synthase (662 aa).

Residues asparagine 235, methionine 264, tyrosine 293, histidine 329, 349-351, 390-393, and glutamate 429 each bind substrate; these read SRG and DGMR. Zn(2+) is bound at residue histidine 433. Tyrosine 456 is a binding site for substrate. Histidine 497 lines the Zn(2+) pocket. Residues cysteine 577, cysteine 580, and cysteine 585 each coordinate [4Fe-4S] cluster.

It belongs to the ThiC family. In terms of assembly, homodimer. The cofactor is [4Fe-4S] cluster.

The catalysed reaction is 5-amino-1-(5-phospho-beta-D-ribosyl)imidazole + S-adenosyl-L-methionine = 4-amino-2-methyl-5-(phosphooxymethyl)pyrimidine + CO + 5'-deoxyadenosine + formate + L-methionine + 3 H(+). It functions in the pathway cofactor biosynthesis; thiamine diphosphate biosynthesis. Functionally, catalyzes the synthesis of the hydroxymethylpyrimidine phosphate (HMP-P) moiety of thiamine from aminoimidazole ribotide (AIR) in a radical S-adenosyl-L-methionine (SAM)-dependent reaction. This is Phosphomethylpyrimidine synthase from Shewanella halifaxensis (strain HAW-EB4).